The chain runs to 226 residues: Probable peroxiredoxin prdx-3 (226 aa).

In terms of domain architecture, Thioredoxin spans 33 to 191 (LGPKNTVPAF…TLRVLKAFQF (159 aa)). C78 (cysteine sulfenic acid (-SOH) intermediate) is an active-site residue.

The protein belongs to the peroxiredoxin family. AhpC/Prx1 subfamily. As to quaternary structure, homodimer; disulfide-linked, upon oxidation.

It catalyses the reaction a hydroperoxide + [thioredoxin]-dithiol = an alcohol + [thioredoxin]-disulfide + H2O. Its function is as follows. Thiol-specific peroxidase that catalyzes the reduction of hydrogen peroxide and organic hydroperoxides to water and alcohols, respectively. Plays a role in cell protection against oxidative stress by detoxifying peroxides and as sensor of hydrogen peroxide-mediated signaling events. The protein is Probable peroxiredoxin prdx-3 (prdx-3) of Caenorhabditis elegans.